A 491-amino-acid polypeptide reads, in one-letter code: Histamine H1 receptor (491 aa).

Residues 1–30 (MTCPNSSCVFEDKMCQGNKTAPANDAQLTP) are Extracellular-facing. N-linked (GlcNAc...) asparagine glycosylation is found at asparagine 5 and asparagine 18. The helical transmembrane segment at 31-51 (LVVVLSTISLVTVGLNLLVLY) threads the bilayer. The Cytoplasmic segment spans residues 52 to 65 (AVRSERKLHTVGNL). The helical transmembrane segment at 66-90 (YIVSLSVADLIVGVVVMPMNILYLL) threads the bilayer. The Extracellular segment spans residues 91–98 (MSRWSLGR). A helical membrane pass occupies residues 99–124 (PLCLFWLSMDYVASTASIFSVFILCI). A disulfide bridge links cysteine 101 with cysteine 181. 2 residues coordinate histamine: aspartate 108 and threonine 113. The tract at residues 108 to 113 (DYVAST) is important for agonist binding. At 125–145 (DRYRSVQQPLKYLRYRTKTRA) the chain is on the cytoplasmic side. A phosphothreonine mark is found at threonine 141 and threonine 143. Residues 146–165 (SITILAAWFLSFLWIIPILG) form a helical membrane-spanning segment. Residues 166-189 (WRHFQPKTPEPREDKCETDFYNVT) are Extracellular-facing. A helical transmembrane segment spans residues 190–212 (WFKVMTAIINFYLPTLLMLWFYA). Asparagine 199 serves as a coordination point for histamine. The Cytoplasmic segment spans residues 213–420 (KIYKAVRQHC…MNRERKAAKQ (208 aa)). Serine 231 is subject to Phosphoserine. 2 disordered regions span residues 246 to 297 (QVGA…KEEK) and 360 to 385 (QSFS…SESS). The segment covering 252–262 (PGKESPWEVLK) has biased composition (basic and acidic residues). Phosphoserine occurs at positions 384, 400, and 402. A helical membrane pass occupies residues 421–444 (LGFIMAAFIICWIPYFIFFMVIAF). The tract at residues 428–432 (FIICW) is important for agonist binding. Position 435 (tyrosine 435) interacts with histamine. A disulfide bridge connects residues cysteine 445 and cysteine 448. The Extracellular segment spans residues 445–450 (CESCCN). Residues 451 to 473 (QHVHMFTIWLGYINSTLNPLIYP) form a helical membrane-spanning segment. At 474-491 (LCNENFKKTFKKILHIRS) the chain is on the cytoplasmic side.

Belongs to the G-protein coupled receptor 1 family. Post-translationally, phosphorylation at sites in the second and third cytoplasmic loops independently contribute to agonist-induced receptor down-regulation. Brain, lung, small intestine, uterus, adrenal medulla and spleen.

The protein localises to the cell membrane. Functionally, G-protein-coupled receptor for histamine, a biogenic amine that functions as an immune modulator and a neurotransmitter. Through the H1 receptor, histamine mediates the contraction of smooth muscles and increases capillary permeability due to contraction of terminal venules. Also mediates neurotransmission in the central nervous system and thereby regulates circadian rhythms, emotional and locomotor activities as well as cognitive functions. In Bos taurus (Bovine), this protein is Histamine H1 receptor.